The primary structure comprises 95 residues: Opiscorpine-4 (95 aa).

The first 19 residues, 1-19 (MNNKLTALIFLGLLAIASC), serve as a signal peptide directing secretion. The region spanning 55–95 (EFMCVANIDMTKSCDTHCQKASGEKGYCHGTKCKCGVPLSY) is the BetaSPN-type CS-alpha/beta domain. 3 disulfides stabilise this stretch: Cys58-Cys82, Cys68-Cys87, and Cys72-Cys89.

Belongs to the long chain scorpion toxin family. Class 3 subfamily. In terms of tissue distribution, expressed by the venom gland.

Its subcellular location is the secreted. Has antimicrobial activity against yeasts and bacteria. This Opistophthalmus carinatus (African yellow leg scorpion) protein is Opiscorpine-4.